We begin with the raw amino-acid sequence, 2620 residues long: Ubiquitin carboxyl-terminal hydrolase 24 (2620 aa).

Residues 3 to 44 enclose the UBA domain; the sequence is SEEEQHMTTLLCMGFSDPATIRKALRLAKNDINEAVALLTNE. The interval 45–102 is disordered; it reads RPGLDYGGYEPMDSGGGPSPGPGGGPRGDGGGDGGGGGPSRGGSTGGGGGFDPPPAYH. A compositionally biased stretch (gly residues) spans 58–95; that stretch reads SGGGPSPGPGGGPRGDGGGDGGGGGPSRGGSTGGGGGF. Ser63 and Ser88 each carry phosphoserine. The residue at position 942 (Tyr942) is a Phosphotyrosine. 2 disordered regions span residues 1034–1054 and 1129–1151; these read TSGSGTPSGSSADSSTSSSSS and TLLSESSSQSSKSPSLSSKQQHQ. The segment covering 1131–1151 has biased composition (low complexity); the sequence is LSESSSQSSKSPSLSSKQQHQ. Ser1141 and Ser1285 each carry phosphoserine. In terms of domain architecture, USP spans 1689–2042; that stretch reads VGLRNGGATC…NAYMLFYQRV (354 aa). The active-site Nucleophile is the Cys1698. The interval 1921-1945 is disordered; that stretch reads ARQDSSSEVGENGRSVDQGGGGSPR. Phosphoserine is present on Ser1943. Residue His1970 is the Proton acceptor of the active site. Ser2047, Ser2077, and Ser2561 each carry phosphoserine. Residues 2063–2090 are disordered; that stretch reads AEDLSLSAPSSPEISPQSSPRPHRPNND. The span at 2069-2082 shows a compositional bias: low complexity; sequence SAPSSPEISPQSSP. Thr2565 carries the phosphothreonine modification. The segment at 2575–2620 is disordered; that stretch reads EKEQSGSSNGSESSPANENGDRHLQQGSESPMMIGELRSDLDDVDP. Positions 2579–2592 are enriched in low complexity; that stretch reads SGSSNGSESSPANE. Position 2604 is a phosphoserine (Ser2604). A compositionally biased stretch (basic and acidic residues) spans 2611 to 2620; it reads LRSDLDDVDP.

It belongs to the peptidase C19 family. In terms of assembly, (Microbial infection) Interacts with human cytomegalovirus protein UL38.

The catalysed reaction is Thiol-dependent hydrolysis of ester, thioester, amide, peptide and isopeptide bonds formed by the C-terminal Gly of ubiquitin (a 76-residue protein attached to proteins as an intracellular targeting signal).. Ubiquitin-specific protease that regulates cell survival in various contexts through modulating the protein stability of some of its substrates including DDB2, MCL1 or TP53. Plays a positive role on ferritinophagy where ferritin is degraded in lysosomes and releases free iron. The chain is Ubiquitin carboxyl-terminal hydrolase 24 (USP24) from Homo sapiens (Human).